The chain runs to 420 residues: MSSSPTVLELFDVCFKQEDVDSLKKPNWFTDVSIDYVDELIEHLWFPSYPNQANEILLLRPSLVFLLAEAAISPEELKVALPKKLMNCKYLFMPINDLDKHAAGSGGSHWSLMVASIPDGQCYYYDSLSNGKTKDCRSALARVSDLFKKKFTIECMPVQQQRNGYDCGAHVCAFTLELVRRLLHSPMPTSSMWNLSTFQPDVTAIREQLSRCLDHIINSLGTRVSGDFDEDFPTGTVFFDLESHLPLLDVALPVLPKSSDSSETSHESSNSNLKKSSESGSTNHHNNHESDKDLHHEGHHHHHHHHHHHHSHDDDPSSPAEKKQNHVPSPSEKIQDHVPSPSEKKQDRVPSPSNNKEDHLPLLSDEKLDKSAIDKIEPTPLPSVHMNSHIAKGELPKFHNSTDNPFLTPPEELVSGDFPF.

The segment covering lysine 257–serine 281 has biased composition (low complexity). The interval lysine 257–phenylalanine 420 is disordered. Basic and acidic residues predominate over residues asparagine 286 to histidine 296. Residues glutamate 297–histidine 310 are compositionally biased toward basic residues. Basic and acidic residues predominate over residues serine 311–glutamine 324. 3 positions are modified to phosphoserine: serine 329, serine 340, and serine 351. Over residues asparagine 355 to glutamate 377 the composition is skewed to basic and acidic residues.

This sequence belongs to the peptidase C48 family. As to quaternary structure, interacts with csn1. It is, however, not a component of the signalosome.

Its subcellular location is the cytoplasm. Protease that catalyzes two essential functions in the NEDD8 pathway: processing of full-length NEDD8 to its mature form and deconjugation of NEDD8 from targeted proteins such as the pcu1, pcu2 and pcu4 cullins and other proteins. The polypeptide is NEDD8-specific protease 1 (nep1) (Schizosaccharomyces pombe (strain 972 / ATCC 24843) (Fission yeast)).